The sequence spans 387 residues: DNA primase small subunit PriS (387 aa).

Residues Asp-98, Asp-100, and Asp-289 contribute to the active site.

The protein belongs to the eukaryotic-type primase small subunit family. Heterodimer of a small subunit (PriS) and a large subunit (PriL). It depends on Mg(2+) as a cofactor. The cofactor is Mn(2+).

Catalytic subunit of DNA primase, an RNA polymerase that catalyzes the synthesis of short RNA molecules used as primers for DNA polymerase during DNA replication. The small subunit contains the primase catalytic core and has DNA synthesis activity on its own. Binding to the large subunit stabilizes and modulates the activity, increasing the rate of DNA synthesis while decreasing the length of the DNA fragments, and conferring RNA synthesis capability. The DNA polymerase activity may enable DNA primase to also catalyze primer extension after primer synthesis. May also play a role in DNA repair. The chain is DNA primase small subunit PriS from Halorubrum lacusprofundi (strain ATCC 49239 / DSM 5036 / JCM 8891 / ACAM 34).